The following is a 443-amino-acid chain: MPFIPHSPEEVREMLSVIGVQSIEDLFVDIPAEMRPRSFELPLGLSEMQVLAKMEEMAARNRTDVVSFLGGGFYSHHIPAAVDALVSRGEFYTAYTPYQPEASQGTLQAIFEYQTAVCRLLDMDCANASVYDGGSAIFEAMMMAVRATKRRKLVIDEAVSPIWRTMLASYTSNLSLDLVTVPQVDGRSDMAAMKAAVDTGCAAVVVQNPNFFGVVEDFTDLFAHAKSQKAASVISVYPVMQSVLKTPGEMGADIAVAEGQSLGQPLSFGGPYLGIMTCTKDMVRQMPGRIVGRTNDTEGRTGYVLTLQAREQHIRRAKATSNICSNQALCALRTLVHLCLLGPEGLIRTAELSMERARYAMERLTAIAGVRPLNTAPFGNEFAVRLPIPAFEAVDRLTARGYVPGFPVGRYYAGMDDVLLVACTEKNSFEQVGILAEMLGGIL.

The protein belongs to the GcvP family. N-terminal subunit subfamily. In terms of assembly, the glycine cleavage system is composed of four proteins: P, T, L and H. In this organism, the P 'protein' is a heterodimer of two subunits.

It carries out the reaction N(6)-[(R)-lipoyl]-L-lysyl-[glycine-cleavage complex H protein] + glycine + H(+) = N(6)-[(R)-S(8)-aminomethyldihydrolipoyl]-L-lysyl-[glycine-cleavage complex H protein] + CO2. The glycine cleavage system catalyzes the degradation of glycine. The P protein binds the alpha-amino group of glycine through its pyridoxal phosphate cofactor; CO(2) is released and the remaining methylamine moiety is then transferred to the lipoamide cofactor of the H protein. This is Probable glycine dehydrogenase (decarboxylating) subunit 1 from Nitratidesulfovibrio vulgaris (strain DSM 19637 / Miyazaki F) (Desulfovibrio vulgaris).